Consider the following 53-residue polypeptide: Small ribosomal subunit protein uS14 (53 aa).

Zn(2+) contacts are provided by Cys-18, Cys-21, Cys-36, and Cys-39.

The protein belongs to the universal ribosomal protein uS14 family. Zinc-binding uS14 subfamily. In terms of assembly, part of the 30S ribosomal subunit. Zn(2+) is required as a cofactor.

Functionally, binds 16S rRNA, required for the assembly of 30S particles. This Thermoplasma volcanium (strain ATCC 51530 / DSM 4299 / JCM 9571 / NBRC 15438 / GSS1) protein is Small ribosomal subunit protein uS14.